A 563-amino-acid chain; its full sequence is Membrane protein insertase YidC (563 aa).

A helical transmembrane segment spans residues 6-26; it reads TILWMIFSFSLLLLWNNWQIH. Residues 36-68 are disordered; the sequence is PPASSAASPAEGQQAAANGQAATPSVPTTPAAA. 4 helical membrane passes run 373-393, 443-463, 482-502, and 512-532; these read WGWA…PLAA, LPMV…LASV, PYFI…KLNP, and VMMI…AGLV.

It belongs to the OXA1/ALB3/YidC family. Type 1 subfamily. As to quaternary structure, interacts with the Sec translocase complex via SecD. Specifically interacts with transmembrane segments of nascent integral membrane proteins during membrane integration.

The protein localises to the cell inner membrane. Required for the insertion and/or proper folding and/or complex formation of integral membrane proteins into the membrane. Involved in integration of membrane proteins that insert both dependently and independently of the Sec translocase complex, as well as at least some lipoproteins. Aids folding of multispanning membrane proteins. This is Membrane protein insertase YidC from Bordetella petrii (strain ATCC BAA-461 / DSM 12804 / CCUG 43448).